An 84-amino-acid polypeptide reads, in one-letter code: UPF0473 protein CPF_2030 (84 aa).

This sequence belongs to the UPF0473 family.

This is UPF0473 protein CPF_2030 from Clostridium perfringens (strain ATCC 13124 / DSM 756 / JCM 1290 / NCIMB 6125 / NCTC 8237 / Type A).